Reading from the N-terminus, the 522-residue chain is Maturase K (522 aa).

Belongs to the intron maturase 2 family. MatK subfamily.

The protein resides in the plastid. It is found in the chloroplast. Functionally, usually encoded in the trnK tRNA gene intron. Probably assists in splicing its own and other chloroplast group II introns. The protein is Maturase K of Iris danfordiae (Danford iris).